We begin with the raw amino-acid sequence, 368 residues long: Proline-rich protein 5-like (368 aa).

Residue serine 28 is modified to Phosphoserine. The interval 312–368 (LGEESGGEDKCLLLQPSFPPPHRQCSSEPNITDGPDEPEQGATGSQEDSELNCASLS) is disordered. Polar residues predominate over residues 353–368 (ATGSQEDSELNCASLS).

This sequence belongs to the PROTOR family. As to quaternary structure, interacts with the mammalian target of rapamycin complex 2 (mTORC2) which contains MTOR, MLST8, PRR5, RICTOR, MAPKAP1 and DEPTOR. Interacts with RFFL. Interacts (via C-terminus) with ZFP36 (via C-terminus); this interaction may accelerate ZFP36-mediated mRNA decay during stress. Interacts with RICTOR. In terms of processing, ubiquitinated. Ubiquitination by RFFL promotes proteasomal degradation of PRR5L thereby modifying the substrate-specific activity of the mTORC2 complex. Ubiquitination by RFFL is stimulated by LPA/lysophosphatidic acid.

Its function is as follows. Associates with the mTORC2 complex that regulates cellular processes including survival and organization of the cytoskeleton. Regulates the activity of the mTORC2 complex in a substrate-specific manner preventing for instance the specific phosphorylation of PKCs and thereby controlling cell migration. Plays a role in the stimulation of ZFP36-mediated mRNA decay of several ZFP36-associated mRNAs, such as TNF-alpha and GM-CSF, in response to stress. Required for ZFP36 localization to cytoplasmic stress granule (SG) and P-body (PB) in response to stress. This Bos taurus (Bovine) protein is Proline-rich protein 5-like (PRR5L).